A 211-amino-acid chain; its full sequence is tRNA (guanine-N(7)-)-methyltransferase (211 aa).

S-adenosyl-L-methionine contacts are provided by Glu-44, Asp-69, Asp-96, and Asp-118. Residue Asp-118 is part of the active site. Lys-122 provides a ligand contact to substrate. Residues 124 to 129 are interaction with RNA; sequence RHEKRR. Residues Asp-154 and 191-194 each bind substrate; that span reads TEYE.

This sequence belongs to the class I-like SAM-binding methyltransferase superfamily. TrmB family.

The enzyme catalyses guanosine(46) in tRNA + S-adenosyl-L-methionine = N(7)-methylguanosine(46) in tRNA + S-adenosyl-L-homocysteine. It participates in tRNA modification; N(7)-methylguanine-tRNA biosynthesis. In terms of biological role, catalyzes the formation of N(7)-methylguanine at position 46 (m7G46) in tRNA. This Streptococcus mutans serotype c (strain ATCC 700610 / UA159) protein is tRNA (guanine-N(7)-)-methyltransferase.